The following is a 250-amino-acid chain: 2,3-bisphosphoglycerate-dependent phosphoglycerate mutase (250 aa).

Substrate is bound by residues 8-15 (RHGESKWN), 21-22 (TG), Arg60, 87-90 (ERHY), Lys98, 114-115 (RR), and 183-184 (GN). His9 functions as the Tele-phosphohistidine intermediate in the catalytic mechanism. Glu87 (proton donor/acceptor) is an active-site residue.

It belongs to the phosphoglycerate mutase family. BPG-dependent PGAM subfamily.

It carries out the reaction (2R)-2-phosphoglycerate = (2R)-3-phosphoglycerate. It functions in the pathway carbohydrate degradation; glycolysis; pyruvate from D-glyceraldehyde 3-phosphate: step 3/5. Catalyzes the interconversion of 2-phosphoglycerate and 3-phosphoglycerate. The protein is 2,3-bisphosphoglycerate-dependent phosphoglycerate mutase of Borrelia recurrentis (strain A1).